Consider the following 120-residue polypeptide: Ribonuclease P protein component (120 aa).

The protein belongs to the RnpA family. As to quaternary structure, consists of a catalytic RNA component (M1 or rnpB) and a protein subunit.

The catalysed reaction is Endonucleolytic cleavage of RNA, removing 5'-extranucleotides from tRNA precursor.. In terms of biological role, RNaseP catalyzes the removal of the 5'-leader sequence from pre-tRNA to produce the mature 5'-terminus. It can also cleave other RNA substrates such as 4.5S RNA. The protein component plays an auxiliary but essential role in vivo by binding to the 5'-leader sequence and broadening the substrate specificity of the ribozyme. The sequence is that of Ribonuclease P protein component from Desulfotalea psychrophila (strain LSv54 / DSM 12343).